The chain runs to 323 residues: tRNA U34 carboxymethyltransferase (323 aa).

Carboxy-S-adenosyl-L-methionine contacts are provided by residues K91, W105, K110, G130, 152–154 (DPT), 181–182 (IE), M196, Y200, and R315.

The protein belongs to the class I-like SAM-binding methyltransferase superfamily. CmoB family. As to quaternary structure, homotetramer.

The enzyme catalyses carboxy-S-adenosyl-L-methionine + 5-hydroxyuridine(34) in tRNA = 5-carboxymethoxyuridine(34) in tRNA + S-adenosyl-L-homocysteine + H(+). Catalyzes carboxymethyl transfer from carboxy-S-adenosyl-L-methionine (Cx-SAM) to 5-hydroxyuridine (ho5U) to form 5-carboxymethoxyuridine (cmo5U) at position 34 in tRNAs. The polypeptide is tRNA U34 carboxymethyltransferase (Escherichia coli O8 (strain IAI1)).